Reading from the N-terminus, the 865-residue chain is DNA topoisomerase 3-beta (865 aa).

One can recognise a Toprim domain in the interval 6-151; that stretch reads RVLMVAEKPS…KVYRARFSSV (146 aa). Positions 12, 116, and 118 each coordinate Mg(2+). Positions 167–587 constitute a Topo IA-type catalytic domain; the sequence is NRDEALAVDA…HVIQQFRRKF (421 aa). The tract at residues 209–214 is interaction with DNA; sequence SYGPCQ. Catalysis depends on tyrosine 331, which acts as the O-(5'-phospho-DNA)-tyrosine intermediate. Over residues 833–853 the composition is skewed to basic residues; sequence RRGGRGRGRGRGRGRGGRRGS. The disordered stretch occupies residues 833–865; the sequence is RRGGRGRGRGRGRGRGGRRGSKSVDPKMSFRDF. Basic and acidic residues predominate over residues 854–865; sequence KSVDPKMSFRDF.

It belongs to the type IA topoisomerase family. The cofactor is Mg(2+).

It catalyses the reaction ATP-independent breakage of single-stranded DNA, followed by passage and rejoining.. Functionally, releases the supercoiling and torsional tension of DNA introduced during the DNA replication and transcription by transiently cleaving and rejoining one strand of the DNA duplex. Introduces a single-strand break via transesterification at a target site in duplex DNA. The scissile phosphodiester is attacked by the catalytic tyrosine of the enzyme, resulting in the formation of a DNA-(5'-phosphotyrosyl)-enzyme intermediate and the expulsion of a 3'-OH DNA strand. The free DNA strand than undergoes passage around the unbroken strand thus removing DNA supercoils. Finally, in the religation step, the DNA 3'-OH attacks the covalent intermediate to expel the active-site tyrosine and restore the DNA phosphodiester backbone. The chain is DNA topoisomerase 3-beta from Arabidopsis thaliana (Mouse-ear cress).